The sequence spans 660 residues: DNA mismatch repair protein MutL (660 aa).

Residues 408-436 (DQTSASASVKHASRSQDENQLSEHPNLDF) form a disordered region. Over residues 425 to 436 (ENQLSEHPNLDF) the composition is skewed to polar residues.

Belongs to the DNA mismatch repair MutL/HexB family.

Its function is as follows. This protein is involved in the repair of mismatches in DNA. It is required for dam-dependent methyl-directed DNA mismatch repair. May act as a 'molecular matchmaker', a protein that promotes the formation of a stable complex between two or more DNA-binding proteins in an ATP-dependent manner without itself being part of a final effector complex. In Streptococcus uberis (strain ATCC BAA-854 / 0140J), this protein is DNA mismatch repair protein MutL.